Reading from the N-terminus, the 217-residue chain is E3 ubiquitin-protein ligase znrf2 (217 aa).

2 disordered regions span residues 1 to 27 (MGAKQSSPAANGRTRAYSGSDLPSATA) and 63 to 111 (QFIS…ERST). G2 carries the N-myristoyl glycine lipid modification. The segment covering 68 to 100 (RTRSVGPSARPQSGINIPNSGAYSSADSGNSTP) has biased composition (polar residues). The RING-type; atypical zinc-finger motif lies at 174 to 215 (CAICLEELLQGDTIARLPCLCIYHKGCIDEWFEVNRSCPEHP).

It localises to the endosome membrane. It is found in the lysosome membrane. The protein resides in the presynaptic cell membrane. It catalyses the reaction S-ubiquitinyl-[E2 ubiquitin-conjugating enzyme]-L-cysteine + [acceptor protein]-L-lysine = [E2 ubiquitin-conjugating enzyme]-L-cysteine + N(6)-ubiquitinyl-[acceptor protein]-L-lysine.. The protein operates within protein modification; protein ubiquitination. May play a role in the establishment and maintenance of neuronal transmission and plasticity via its ubiquitin ligase activity. E3 ubiquitin ligases accept ubiquitin from an E2 ubiquitin-conjugating enzyme in the form of a thioester and then directly transfer the ubiquitin to targeted substrates. This Danio rerio (Zebrafish) protein is E3 ubiquitin-protein ligase znrf2 (znrf2).